Here is a 528-residue protein sequence, read N- to C-terminus: Tubulin-specific chaperone E (528 aa).

One can recognise a CAP-Gly domain in the interval 27–71 (GLVPPVAGLWLGVEWDNPERGKHDGSHEGTVYFKCRHPTAGSFIR). LRR repeat units lie at residues 152–176 (CPNI…DIAD), 178–206 (LKHL…TFPT), 207–229 (LKVL…ASGW), 231–253 (VLEK…DVLQ), 254–274 (TVKL…LFLI), 279–300 (RLEQ…DAGI), and 309–330 (SLQY…NELD). Residues 343–385 (NPLTEGSKDAQTTRQFIIARIGQLRTLNKCAIEPEERRGAELD) form the LRRCT domain. At Lys-464 the chain carries N6-acetyllysine. Ser-496 is modified (phosphoserine).

Belongs to the TBCE family. In terms of assembly, supercomplex made of cofactors A to E. Cofactors A and D function by capturing and stabilizing tubulin in a quasi-native conformation. Cofactor E binds to the cofactor D-tubulin complex; interaction with cofactor C then causes the release of tubulin polypeptides that are committed to the native state. Cofactors B and E can form a heterodimer which binds to alpha-tubulin and enhances their ability to dissociate tubulin heterodimers. Interacts with TBCD.

The protein localises to the cytoplasm. It localises to the cytoskeleton. In terms of biological role, tubulin-folding protein; involved in the second step of the tubulin folding pathway and in the regulation of tubulin heterodimer dissociation. Required for correct organization of microtubule cytoskeleton and mitotic splindle, and maintenance of the neuronal microtubule network. In Bos taurus (Bovine), this protein is Tubulin-specific chaperone E (TBCE).